A 306-amino-acid polypeptide reads, in one-letter code: Protein pxr1 (306 aa).

Residues 1–11 (MGLAAPRKRTK) are compositionally biased toward basic residues. 2 disordered regions span residues 1 to 27 (MGLA…STSG) and 148 to 241 (AQKE…SDIP). A compositionally biased stretch (polar residues) spans 15–27 (DPNNTNWSRSTSG). The G-patch domain maps to 25 to 79 (TSGYGHKIMSSQGWTPGSFLGARNAAHADMFTAASASHIRVVVKDDTLGLGARSK). Residues 182–191 (NTLKALREEQ) are compositionally biased toward basic and acidic residues. A compositionally biased stretch (basic residues) spans 219 to 228 (KKERKTKKRK).

This sequence belongs to the PINX1 family.

The protein localises to the nucleus. The protein resides in the nucleolus. Involved in rRNA-processing at A0, A1 and A2 sites and negatively regulates telomerase. The polypeptide is Protein pxr1 (pxr1) (Aspergillus oryzae (strain ATCC 42149 / RIB 40) (Yellow koji mold)).